Reading from the N-terminus, the 280-residue chain is Eukaryotic translation initiation factor 3 subunit F-1 (280 aa).

Positions 8–138 constitute an MPN domain; the sequence is VRVHPVVLFQ…LRAYVCIQLG (131 aa).

It belongs to the eIF-3 subunit F family. Component of the eukaryotic translation initiation factor 3 (eIF-3) complex. The eIF-3 complex interacts with pix.

The protein resides in the cytoplasm. Functionally, component of the eukaryotic translation initiation factor 3 (eIF-3) complex, which is involved in protein synthesis of a specialized repertoire of mRNAs and, together with other initiation factors, stimulates binding of mRNA and methionyl-tRNAi to the 40S ribosome. The eIF-3 complex specifically targets and initiates translation of a subset of mRNAs involved in cell proliferation. The chain is Eukaryotic translation initiation factor 3 subunit F-1 from Drosophila ananassae (Fruit fly).